Reading from the N-terminus, the 385-residue chain is UDP-N-acetylglucosamine--N-acetylmuramyl-(pentapeptide) pyrophosphoryl-undecaprenol N-acetylglucosamine transferase (385 aa).

Residues 24–26 (TAG), asparagine 143, arginine 180, serine 214, and glutamine 310 each bind UDP-N-acetyl-alpha-D-glucosamine.

The protein belongs to the glycosyltransferase 28 family. MurG subfamily.

The protein localises to the cell membrane. The catalysed reaction is di-trans,octa-cis-undecaprenyl diphospho-N-acetyl-alpha-D-muramoyl-L-alanyl-D-glutamyl-meso-2,6-diaminopimeloyl-D-alanyl-D-alanine + UDP-N-acetyl-alpha-D-glucosamine = di-trans,octa-cis-undecaprenyl diphospho-[N-acetyl-alpha-D-glucosaminyl-(1-&gt;4)]-N-acetyl-alpha-D-muramoyl-L-alanyl-D-glutamyl-meso-2,6-diaminopimeloyl-D-alanyl-D-alanine + UDP + H(+). Its pathway is cell wall biogenesis; peptidoglycan biosynthesis. In terms of biological role, cell wall formation. Catalyzes the transfer of a GlcNAc subunit on undecaprenyl-pyrophosphoryl-MurNAc-pentapeptide (lipid intermediate I) to form undecaprenyl-pyrophosphoryl-MurNAc-(pentapeptide)GlcNAc (lipid intermediate II). The polypeptide is UDP-N-acetylglucosamine--N-acetylmuramyl-(pentapeptide) pyrophosphoryl-undecaprenol N-acetylglucosamine transferase (Mycolicibacterium smegmatis (strain ATCC 700084 / mc(2)155) (Mycobacterium smegmatis)).